Reading from the N-terminus, the 93-residue chain is Protamine-3 (93 aa).

Residues 1–93 form a disordered region; it reads MGSRCAKLGT…QSPEPKQTRS (93 aa). Over residues 37 to 57 the composition is skewed to acidic residues; sequence EGEEEEEGEEEEEEEGEEEEL. The segment covering 81 to 93 has biased composition (polar residues); sequence EVQQSPEPKQTRS. Position 85 is a phosphoserine (S85).

Belongs to the protamine P3 family.

It localises to the nucleus. Its subcellular location is the chromosome. Functionally, protamines substitute for histones in the chromatin of sperm during the haploid phase of spermatogenesis. They compact sperm DNA into a highly condensed, stable and inactive complex. This chain is Protamine-3 (PRM3), found in Bos taurus (Bovine).